The sequence spans 334 residues: NAD-dependent protein deacylase sirtuin-6 (334 aa).

An N-acetylserine modification is found at Ser2. Ser10 carries the phosphoserine modification. In terms of domain architecture, Deacetylase sirtuin-type spans 27–272 (PEELERKVWE…CRLMKHLGLE (246 aa)). Lys33 carries the N6-acetyllysine modification. Ala53, Thr57, Phe64, Arg65, Trp71, Gln113, and His133 together coordinate NAD(+). Residue His133 is the Proton acceptor of the active site. Zn(2+) is bound by residues Cys141, Cys144, and Cys166. A Glycyl lysine isopeptide (Lys-Gly) (interchain with G-Cter in ubiquitin) cross-link involves residue Lys170. Cys177 provides a ligand contact to Zn(2+). The NAD(+) site is built by Gly214, Ser216, Asn240, Gln242, and Val258. The tract at residues 312 to 334 (KSKPNSPILHRPPKRVKTEAAPS) is disordered.

The protein belongs to the sirtuin family. Class IV subfamily. As to quaternary structure, homodimer; binds to nucleosomes and DNA ends as a homodimer. Interacts with RELA; interferes with RELA binding to target DNA. Interacts with SMARCA5; promoting recruitment of SMARCA5/SNF2H to double-strand breaks (DSBs) sites. Interacts with the mTORC2 complex; preventing the ability of SIRT6 to deacetylate FOXO1. Interacts with the CLOCK-BMAL1 complex; recruited by the CLOCK-BMAL1 complex to regulate expression of clock-controlled genes. Interacts with CSNK2A2; preventing CSNK2A2 localization to the nucleus. It depends on Zn(2+) as a cofactor. In terms of processing, acetylated at Lys-33. Deacetylation at Lys-33 by SIRT1 promotes homomultimerization and binding to double-strand breaks (DSBs) sites. Phosphorylation at Ser-10 by MAPK8/JNK1 in response to oxidative stress stimulates the mono-ADP-ribosyltransferase activity on PARP1, leading to PARP1 recruitment to double-strand breaks (DSBs). Post-translationally, monoubiquitinated at Lys-170 by STUB1/CHIP, preventing its degradation by the proteasome. In terms of processing, sumoylated, leading to specifically decrease ability to deacetylate histone H3 at 'Lys-56' (H3K56ac). In terms of tissue distribution, highest levels are found in muscle, thymus, spleen, brain and heart (at protein level).

The protein localises to the nucleus. Its subcellular location is the chromosome. The protein resides in the telomere. It localises to the endoplasmic reticulum. The catalysed reaction is N(6)-acetyl-L-lysyl-[protein] + NAD(+) + H2O = 2''-O-acetyl-ADP-D-ribose + nicotinamide + L-lysyl-[protein]. It carries out the reaction N(6)-tetradecanoyl-L-lysyl-[protein] + NAD(+) + H2O = 2''-O-tetradecanoyl-ADP-D-ribose + nicotinamide + L-lysyl-[protein]. The enzyme catalyses N(6)-hexadecanoyl-L-lysyl-[protein] + NAD(+) + H2O = 2''-O-hexadecanoyl-ADP-D-ribose + nicotinamide + L-lysyl-[protein]. It catalyses the reaction L-lysyl-[protein] + NAD(+) = N(6)-(ADP-D-ribosyl)-L-lysyl-[protein] + nicotinamide + H(+). The catalysed reaction is L-arginyl-[protein] + NAD(+) = N(omega)-(ADP-D-ribosyl)-L-arginyl-[protein] + nicotinamide + H(+). With respect to regulation, compared to the defatty-acylase activity, the protein deacetylase activity is weak in vitro, and requires activation. The histone deacetylase activity is strongly activated upon binding to nucleosomes and chromatin in vivo. Two molecules of SIRT6 associate with the acidic patch of one nucleosome, while the C-terminal disordered region of SIRT6 associates with nucleosomal DNA, leading to efficient histone deacetylation. The protein-lysine deacetylase activity is also activated by long-chain free fatty-acids. Its function is as follows. NAD-dependent protein deacetylase, deacylase and mono-ADP-ribosyltransferase that plays an essential role in DNA damage repair, telomere maintenance, metabolic homeostasis, inflammation, tumorigenesis and aging. Displays protein-lysine deacetylase or defatty-acylase (demyristoylase and depalmitoylase) activity, depending on the context. Acts as a key histone deacetylase by catalyzing deacetylation of histone H3 at 'Lys-9', 'Lys-18' and 'Lys-56' (H3K9ac, H3K18ac and H3K56ac, respectively), suppressing target gene expression of several transcription factors, including NF-kappa-B. Acts as an inhibitor of transcription elongation by mediating deacetylation of H3K9ac and H3K56ac, preventing release of NELFE from chromatin and causing transcriptional pausing. Involved in DNA repair by promoting double-strand break (DSB) repair: acts as a DSB sensor by recognizing and binding DSB sites, leading to (1) recruitment of DNA repair proteins, such as SMARCA5/SNF2H, and (2) deacetylation of histone H3K9ac and H3K56ac. SIRT6 participation to DSB repair is probably involved in extension of life span. Also promotes DNA repair by deacetylating non-histone proteins, such as DDB2 and p53/TP53. Specifically deacetylates H3K18ac at pericentric heterochromatin, thereby maintaining pericentric heterochromatin silencing at centromeres and protecting against genomic instability and cellular senescence. Involved in telomere maintenance by catalyzing deacetylation of histone H3 in telomeric chromatin, regulating telomere position effect and telomere movement in response to DNA damage. Required for embryonic stem cell differentiation by mediating histone deacetylation of H3K9ac. Plays a major role in metabolism by regulating processes such as glycolysis, gluconeogenesis, insulin secretion and lipid metabolism. Inhibits glycolysis via histone deacetylase activity and by acting as a corepressor of the transcription factor HIF1A, thereby controlling the expression of multiple glycolytic genes. Has tumor suppressor activity by repressing glycolysis, thereby inhibiting the Warburg effect. Also regulates glycolysis and tumorigenesis by mediating deacetylation and nuclear export of non-histone proteins, such as isoform M2 of PKM (PKM2). Acts as a negative regulator of gluconeogenesis by mediating deacetylation of non-histone proteins, such as FOXO1 and KAT2A/GCN5. Promotes beta-oxidation of fatty acids during fasting by catalyzing deacetylation of NCOA2, inducing coactivation of PPARA. Acts as a regulator of lipid catabolism in brown adipocytes, both by catalyzing deacetylation of histones and non-histone proteins, such as FOXO1. Also acts as a regulator of circadian rhythms, both by regulating expression of clock-controlled genes involved in lipid and carbohydrate metabolism, and by catalyzing deacetylation of PER2. The defatty-acylase activity is specifically involved in regulation of protein secretion. Has high activity toward long-chain fatty acyl groups and mediates protein-lysine demyristoylation and depalmitoylation of target proteins, such as RRAS2 and TNF, thereby regulating their secretion. Also acts as a mono-ADP-ribosyltransferase by mediating mono-ADP-ribosylation of PARP1, TRIM28/KAP1 or SMARCC2/BAF170. Mono-ADP-ribosyltransferase activity is involved in DNA repair, cellular senescence, repression of LINE-1 retrotransposon elements and regulation of transcription. This is NAD-dependent protein deacylase sirtuin-6 from Mus musculus (Mouse).